Consider the following 165-residue polypeptide: Methylated-DNA--protein-cysteine methyltransferase (165 aa).

The active-site Nucleophile; methyl group acceptor is C126.

This sequence belongs to the MGMT family.

It is found in the cytoplasm. It carries out the reaction a 6-O-methyl-2'-deoxyguanosine in DNA + L-cysteinyl-[protein] = S-methyl-L-cysteinyl-[protein] + a 2'-deoxyguanosine in DNA. It catalyses the reaction a 4-O-methyl-thymidine in DNA + L-cysteinyl-[protein] = a thymidine in DNA + S-methyl-L-cysteinyl-[protein]. Its function is as follows. Involved in the cellular defense against the biological effects of O6-methylguanine (O6-MeG) and O4-methylthymine (O4-MeT) in DNA. Repairs the methylated nucleobase in DNA by stoichiometrically transferring the methyl group to a cysteine residue in the enzyme. This is a suicide reaction: the enzyme is irreversibly inactivated. This Mycobacterium bovis (strain ATCC BAA-935 / AF2122/97) protein is Methylated-DNA--protein-cysteine methyltransferase.